Reading from the N-terminus, the 210-residue chain is RNA chaperone ProQ (210 aa).

Residues 118-146 (KAAKPEKKRPARRVAAKGQHAKETTTNKA) are disordered. Residues 123–132 (EKKRPARRVA) show a composition bias toward basic residues.

It belongs to the ProQ family.

Its subcellular location is the cytoplasm. RNA chaperone with significant RNA binding, RNA strand exchange and RNA duplexing activities. The protein is RNA chaperone ProQ of Pasteurella multocida (strain Pm70).